Here is a 366-residue protein sequence, read N- to C-terminus: Elongation factor Ts, mitochondrial (366 aa).

The transit peptide at 1-50 directs the protein to the mitochondrion; sequence MAWSQSARKPMIGLLFRAQQHSARGYSYSAFQAHLSSSNVDQSATLLRRF.

The protein belongs to the EF-Ts family.

Its subcellular location is the mitochondrion. Functionally, associates with the EF-Tu.GDP complex and induces the exchange of GDP to GTP. It remains bound to the aminoacyl-tRNA.EF-Tu.GTP complex up to the GTP hydrolysis stage on the ribosome. This Oryza sativa subsp. japonica (Rice) protein is Elongation factor Ts, mitochondrial.